The primary structure comprises 238 residues: Small ribosomal subunit protein uS2 (238 aa).

This sequence belongs to the universal ribosomal protein uS2 family.

This is Small ribosomal subunit protein uS2 from Haemophilus ducreyi (strain 35000HP / ATCC 700724).